Consider the following 199-residue polypeptide: Pneumococcal vaccine antigen A homolog (199 aa).

It localises to the cell surface. The chain is Pneumococcal vaccine antigen A homolog (pvaA) from Streptococcus pyogenes serotype M18 (strain MGAS8232).